The following is a 507-amino-acid chain: Cobyric acid synthase (507 aa).

The GATase cobBQ-type domain maps to 251-448 (DIDIAVVHLP…LHGLFDSDAF (198 aa)). The active-site Nucleophile is Cys332. His440 is an active-site residue.

It belongs to the CobB/CobQ family. CobQ subfamily.

It participates in cofactor biosynthesis; adenosylcobalamin biosynthesis. Functionally, catalyzes amidations at positions B, D, E, and G on adenosylcobyrinic A,C-diamide. NH(2) groups are provided by glutamine, and one molecule of ATP is hydrogenolyzed for each amidation. The polypeptide is Cobyric acid synthase (Klebsiella pneumoniae subsp. pneumoniae (strain ATCC 700721 / MGH 78578)).